Consider the following 216-residue polypeptide: MTYAYLFKYIIIGDTGVGKSCLLLQFTDKRFQPVHDLTIGVEFGARMVNIDGKQIKLQIWDTAGQESFRSITRSYYRGAAGALLVYDITRRETFNHLTSWLEDARQHSSSNMVIMLIGNKSDLESRRDVKREEGEAFAREHGLIFMETSAKTACNVEEAFINTAKEIYRKIQQGLFDVHNEANGIKIGPQQSISTSVGPSASQRNSRDIGSNSGCC.

6 residues coordinate GDP: Gly-16, Val-17, Gly-18, Lys-19, Ser-20, and Cys-21. GTP contacts are provided by Gly-16, Val-17, Gly-18, Lys-19, Ser-20, Cys-21, and Thr-38. Ser-20 is a binding site for Mg(2+). The short motif at 37-42 (LTIGVE) is the Switch 1 element. Thr-38 and Asp-61 together coordinate Mg(2+). The Switch 2 motif lies at 63–72 (AGQESFRSIT). 6 residues coordinate GTP: Gly-64, Asn-119, Lys-120, Asp-122, Ala-150, and Lys-151. Position 119 (Asn-119) interacts with GDP. Asp-122, Ala-150, and Lys-151 together coordinate GDP. The segment at 189 to 216 (PQQSISTSVGPSASQRNSRDIGSNSGCC) is disordered. At Ser-202 the chain carries Phosphoserine. 2 S-geranylgeranyl cysteine lipidation sites follow: Cys-215 and Cys-216.

This sequence belongs to the small GTPase superfamily. Rab family. In terms of assembly, interacts (in GTP-bound form) with GARIN4 (via N-terminus). Interacts (in GTP-bound form) with GARIN5A. Interacts (in GTP-bound form) with GARIN1B. Interacts with VPS39 and VPS41. Requires Mg(2+) as cofactor. As to expression, expressed in kidney, prostate, lung, liver, thymus, colon, pancreas, and skeletal muscle, and low levels in placenta. Not detected in heart, brain, spleen, testis, ovary, small intestine and leukocyte.

The protein localises to the cell membrane. It localises to the endoplasmic reticulum membrane. The protein resides in the golgi apparatus membrane. Its subcellular location is the cytoplasmic vesicle. It is found in the secretory vesicle. The protein localises to the acrosome. It localises to the autophagosome membrane. The catalysed reaction is GTP + H2O = GDP + phosphate + H(+). Its activity is regulated as follows. Regulated by guanine nucleotide exchange factors (GEFs) which promote the exchange of bound GDP for free GTP, GTPase activating proteins (GAPs) which increase the GTP hydrolysis activity, and GDP dissociation inhibitors (GDIs) which inhibit the dissociation of the nucleotide from the GTPase. Functionally, the small GTPases Rab are key regulators of intracellular membrane trafficking, from the formation of transport vesicles to their fusion with membranes. Rabs cycle between active GTP-bound and inactive GDP-bound states. In their active state, drive transport of vesicular carriers from donor organelles to acceptor organelles to regulate the membrane traffic that maintains organelle identity and morphology. Regulates the compacted morphology of the Golgi. Promotes cytosolic DNA-induced innate immune responses. Regulates IFN responses against DNA viruses by regulating the CGAS-STING signaling axis. Together with RAB2A redundantly required for efficient autophagic flux. This Homo sapiens (Human) protein is Ras-related protein Rab-2B.